The following is a 3323-amino-acid chain: MQLLGLLGLLWMLKASPWATGTLSTATSISQVPFPRAEAASAVLSNSPHSRDLAGWPLGVPQLASPAPGHRENAPMTLTTSPHDTLISETLLNSPVSSNTSTTPTSKFAFKVETTPPTVLVYSATTECVYPTSFIITISHPTSICVTTTQVAFTSSYTSTPVTQKPVTTVTSTYSMTTTEKGTSAMTSSPSTTTARETPIVTVTPSSVSATDTTFHTTISSTTRTTERTPLPTGSIHTTTSPTPVFTTLKTAVTSTSPITSSITSTNTVTSMTTTASQPTATNTLSSPTRTILSSTPVLSTETITSGITNTTPLSTLVTTLPTTISRSTPTSETTYTTSPTSTVTDSTTKIAYSTSMTGTLSTETSLPPTSSSLPTTETATTPMTNLVTTTTEISSHSTPSFSSSTIYSTVSTSTTAISSLPPTSGTMVTSTTMTPSSLSTDIPFTTPTTITHHSVGSTGFLTTATDLTSTFTVSSSSAMSTSVIPSSPSIQNTETSSLVSMTSATTPNVRPTFVSTLSTPTSSLLTTFPATYSFSSSMSASSAGTTHTESISSPPASTSTLHTTAESTLAPTTTTSFTTSTTMEPPSTTAATTGTGQTTFTSSTATFPETTTPTPTTDMSTESLTTAMTSPPITSSVTSTNTVTSMTTTTSPPTTTNSFTSLTSMPLSSTPVPSTEVVTSGTINTIPPSILVTTLPTPNASSMTTSETTYPNSPTGPGTNSTTEITYPTTMTETSSTATSLPPTSPLVSTAKTAKTPTTNLVTTTTKTTSHSTTSFTSSTVYSTASTYTTAITSVPTTLGTMVTSTSMISSTVSTGIPTSQPTTITPSSVGISGSLPMMTDLTSVYTVSNMSARPTTVIPSSPTVQNTEISISVSMTSATTPSGGPTFTSTENTPTRSLLTSFPMTHSFSSSMSESSAGTTHTESISSPRGTTSTLHTTVESTPSPTTTTSFTTSTMMEPPSSTVSTTGRGQTTFPSSTATFPETTTLTPTTDISTVSLTTAMTSPPPVSSSITPTNTMTSMRTTTYWPTATNTLSPLTSSILSSTPVPSTEMITSHTTNTTPLSTLVTTLLTTITRSTPTSETTYPTSPTSIVSDSTTEITYSTSITGTLSTATTLPPTSSSLPTTETATMTPTTTLITTTPNTTSLSTPSFTSSTIYSTVSTSTTAISSASPTSGTMVTSTTMTPSSLSTDTPSTTPTTITYPSVGSTGFLTTATDLTSTFTVSSSSAMSTSVIPSSPSIQNTETSSLVSMTSATTPSLRPTITSTDSTLTSSLLTTFPSTYSFSSSMSASSAGTTHTETISSLPASTNTIHTTAESALAPTTTTSFTTSPTMEPPSTTVATTGTGQTTFPSSTATFLETTTLTPTTDFSTESLTTAMTSTPPITSSITPTDTMTSMRTTTSWPTATNTLSPLTSSILSSTPVPSTEVTTSHTTNTNPVSTLVTTLPITITRSTLTSETAYPSSPTSTVTESTTEITYPTTMTETSSTATSLPPTSSLVSTAETAKTPTTNLVTTTTKTTSHSTTSFTSSTIYSTASTPTTAITSVPTTLGTMVTSTSMIPSTVSTGIPTSQPTTITPSSVGISGSLPMMTDLTSVYTVSSMSARPTSVIPSSPTVQNTETSIFVSMMSATTPSGGPTFTSTENTPTRSLLTSFPVTHSFSSSMSASSVGTTHTQSISSPPAITSTLHTTAESTPSPTTTMSFTTFTKMETPSSTVATTGTGQTTFTSSTATSPKTTTLTPTSDISTGSFKTAVSSTPPITSSITSTYTVTSMTTTTPLGPTATNTLPSFTSSVSSSTPVPSTEAITSGTTNTTPLSTLVTTFSNSDTSSTPTSETTYPTSLTSALTDSTTRTTYSTNMTGTLSTVTSLRPTSSSLLTTVTATVPTTNLVTTTTKITSHSTPSFTSSIATTETPSHSTPRFTSSITTTETPSHSTPRFTSSITNTKTTSHSSPSFTSSITTTETTSHNTPSLTSSITTTKTTSHSTPSYTSLITTTTTTSHSTPSFTSSITTTETTSHNTPSLTSSITTTETTSHSTPSFTSSITTETTSHSTPSFTSLITITEITSHSTLSYTTSITTTETPSHSTLSFTSSITTTETTSHSTPSFTSSITTSEMPSHSTPSFTSSITTTENATHSTPNFTSSITTTETTSHSTPSFTSLITTTETTSHRWGTTETTSYSTPSFTSSNTITETTSHSTPSYITSITTTETPSSSTPSFSSSITTTETTSHSTPGFTSSITTTETTSHSTPSFTSSITTTETTSHDTPSFTSSITTSETPSHSTPSSTSLITTTKTTSHSTPSFTSSITTTETTSHSAHSFTSSITTTETTSHNTRSFTSSITTTETNSHSTTSFTSSITTTETTSHSTPSFSSSITTTETPLHSTPGLTSWVTTTKTTSHITPGLTSSITTTETTSHSTPGFTSSITTTETTSESTPSLSSSTIYSTVSTSTTAITSHFTTSETAVTPTPVTPSSLSTDIPTTSLRTLTPSSVGTSTSLTTTTDFPSIPTDISTLPTRTHIISSSPSIQSTETSSLVGTTSPTMSTVRMTLRITENTPISSFSTSIVVIPETPTQTPPVLTSATGTQTSPAPTTVTFGSTDSSTSTLHTLTPSTALSTIVSTSQVPIPSTHSSTLQTTPSTPSLQTSLTSTSEFTTESFTRGSTSTNAILTSFSTIIWSSTPTIIMSSSPSSASITPVFSTTIHSVPSSPYIFSTENVGSASITGFPSLSSSATTSTSSTSSSLTTALTEITPFSYISLPSTTPCPGTITITIVPASPTDPCVEMDPSTEATSPPTTPLTVFPFTTEMVTCPTSISIQTTLTTYMDTSSMMPESESSISPNASSSTGTGTVPTNTVFTSTRLPTSETWLSNSSVIPLPLPGVSTIPLTMKPSSSLPTILRTSSKSTHPSPPTTRTSETPVATTQTPTTLTSRRTTRITSQMTTQSTLTTTAGTCDNGGTWEQGQCACLPGFSGDRCQLQTRCQNGGQWDGLKCQCPSTFYGSSCEFAVEQVDLDVVETEVGMEVSVDQQFSPDLNDNTSQAYRDFNKTFWNQMQKIFADMQGFTFKGVEILSLRNGSIVVDYLVLLEMPFSPQLESEYEQVKTTLKEGLQNASQDVNSCQDSQTLCFKPDSIKVNNNSKTELTPAAICRRAAPTGYEEFYFPLVEATRLRCVTKCTSGVDNAIDCHQGQCVLETSGPTCRCYSTDTHWFSGPRCEVAVHWRALVGGLTAGAALLVLLLLALGVRAVRSGWWGGQRRGRSWDQDRKWFETWDEEVVGTFSNWGFEDDGTDKDTNFYVALENVDTTMKVHIKRPEMTSSSV.

The signal sequence occupies residues 1–15; it reads MQLLGLLGLLWMLKA. 15 disordered regions span residues 218–243, 270–289, 325–345, 359–380, 539–677, 700–722, 734–756, 909–991, 1170–1201, 1318–1356, 1380–1442, 1484–1509, 1714–1746, 1793–1844, and 1900–2056; these read TISSTTRTTERTPLPTGSIHTTTSPT, TSMTTTASQPTATNTLSSPT, ISRSTPTSETTYTTSPTSTVT, GTLSTETSLPPTSSSLPTTETA, MSAS…PSTE, NASSMTTSETTYPNSPTGPGTNS, ETSSTATSLPPTSPLVSTAKTAK, SFSS…TLTP, ISSASPTSGTMVTSTTMTPSSLSTDTPSTTPT, AESALAPTTTTSFTTSPTMEPPSTTVATTGTGQTTFPSS, AMTS…TNPV, TMTETSSTATSLPPTSSLVSTAETAK, TPSSTVATTGTGQTTFTSSTATSPKTTTLTPTS, FTSS…YPTS, and TSHS…SHST. Residues 270–284 are compositionally biased toward low complexity; that stretch reads TSMTTTASQPTATNT. Residues 545 to 563 are compositionally biased toward polar residues; that stretch reads GTTHTESISSPPASTSTLH. Positions 564–618 are enriched in low complexity; that stretch reads TTAESTLAPTTTTSFTTSTTMEPPSTTAATTGTGQTTFTSSTATFPETTTPTPTT. Polar residues predominate over residues 619–629; the sequence is DMSTESLTTAM. Residues 630–676 show a composition bias toward low complexity; it reads TSPPITSSVTSTNTVTSMTTTTSPPTTTNSFTSLTSMPLSSTPVPST. A compositionally biased stretch (polar residues) spans 700–721; that stretch reads NASSMTTSETTYPNSPTGPGTN. A compositionally biased stretch (low complexity) spans 909–918; that stretch reads SFSSSMSESS. The span at 919–932 shows a compositional bias: polar residues; that stretch reads AGTTHTESISSPRG. Low complexity predominate over residues 933–991; sequence TTSTLHTTVESTPSPTTTTSFTTSTMMEPPSSTVSTTGRGQTTFPSSTATFPETTTLTP. A compositionally biased stretch (low complexity) spans 1324–1356; it reads PTTTTSFTTSPTMEPPSTTVATTGTGQTTFPSS. 32 repeat units span residues 1893–1910, 1911–1927, 1928–1944, 1945–1961, 1962–1978, 1979–1995, 1996–2012, 2013–2029, 2030–2046, 2047–2062, 2063–2079, 2080–2096, 2097–2113, 2114–2130, 2131–2147, 2148–2164, 2165–2191, 2192–2208, 2209–2225, 2226–2242, 2243–2259, 2260–2276, 2277–2293, 2294–2310, 2311–2327, 2328–2344, 2345–2361, 2362–2378, 2379–2395, 2396–2412, 2413–2429, and 2430–2446. Positions 1893 to 2446 are 32 X approximate tandem repeats, Ser/Thr-rich; that stretch reads VTTTTKITSH…SESTPSLSSS (554 aa). Over residues 1907 to 1947 the composition is skewed to polar residues; the sequence is FTSSIATTETPSHSTPRFTSSITTTETPSHSTPRFTSSITN. Over residues 1948-2056 the composition is skewed to low complexity; sequence TKTTSHSSPS…ITTETTSHST (109 aa). 4 stretches are compositionally biased toward low complexity: residues 2100–2170, 2177–2384, 2393–2447, and 2464–2507; these read TETT…TTET, TTET…TTET, TSWV…SSST, and TTSE…TTTT. Disordered stretches follow at residues 2100-2447, 2464-2508, 2578-2608, 2631-2656, 2834-2858, and 2897-2937; these read TETT…SSST, TTSE…TTTD, TQTPPVLTSATGTQTSPAPTTVTFGSTDSST, IPSTHSSTLQTTPSTPSLQTSLTSTS, MMPESESSISPNASSSTGTGTVPTN, and SSLP…TSRR. A compositionally biased stretch (polar residues) spans 2578–2602; the sequence is TQTPPVLTSATGTQTSPAPTTVTFG. Composition is skewed to low complexity over residues 2633–2656, 2834–2849, and 2905–2937; these read STHSSTLQTTPSTPSLQTSLTSTS, MMPESESSISPNASSS, and TSSKSTHPSPPTTRTSETPVATTQTPTTLTSRR. Positions 2976–3009 constitute an EGF-like domain; that stretch reads SGDRCQLQTRCQNGGQWDGLKCQCPSTFYGSSCE. Disulfide bonds link Cys2980–Cys2986 and Cys2999–Cys3008. The SEA domain occupies 3018–3143; sequence DVVETEVGME…DSIKVNNNSK (126 aa). The helical transmembrane segment at 3227–3247 threads the bilayer; the sequence is LVGGLTAGAALLVLLLLALGV.

Highly O-glycosylated and probably also N-glycosylated. In terms of tissue distribution, broad specificity; small intestine, colon, colonic tumors, heart, liver, thymus, prostate, pancreas and gall bladder.

The protein resides in the membrane. It localises to the secreted. Major glycoprotein component of a variety of mucus gels. Thought to provide a protective, lubricating barrier against particles and infectious agents at mucosal surfaces. May be involved in ligand binding and intracellular signaling. The polypeptide is Mucin-3A (Homo sapiens (Human)).